The primary structure comprises 127 residues: Cytochrome b-c1 complex subunit 7, mitochondrial (127 aa).

It belongs to the UQCRB/QCR7 family. In terms of assembly, component of the ubiquinol-cytochrome c oxidoreductase (cytochrome b-c1 complex, complex III, CIII), a multisubunit enzyme composed of 10 subunits. The complex is composed of 3 respiratory subunits cytochrome b (COB), cytochrome c1 (CYT1) and Rieske protein (RIP1), 2 core protein subunits COR1 and QCR2, and 5 low-molecular weight protein subunits QCR6, QCR7, QCR8, QCR9 and QCR10. The complex exists as an obligatory dimer and forms supercomplexes (SCs) in the inner mitochondrial membrane with a monomer or a dimer of cytochrome c oxidase (complex IV, CIV), resulting in 2 different assemblies (supercomplexes III(2)IV and III(2)IV(2)).

The protein resides in the mitochondrion inner membrane. Component of the ubiquinol-cytochrome c oxidoreductase, a multisubunit transmembrane complex that is part of the mitochondrial electron transport chain which drives oxidative phosphorylation. Plays an important role in the uptake of multiple carbon sources such acetate, lactate, amino acids or GlcNAc present in different host niches. The protein is Cytochrome b-c1 complex subunit 7, mitochondrial of Candida albicans (strain SC5314 / ATCC MYA-2876) (Yeast).